Here is a 421-residue protein sequence, read N- to C-terminus: 3-hydroxy-3-methylglutaryl-coenzyme A reductase (421 aa).

Catalysis depends on charge relay system residues glutamate 109, lysine 240, and aspartate 315. Histidine 410 acts as the Proton donor in catalysis.

This sequence belongs to the HMG-CoA reductase family.

It carries out the reaction (R)-mevalonate + 2 NADP(+) + CoA = (3S)-3-hydroxy-3-methylglutaryl-CoA + 2 NADPH + 2 H(+). The protein operates within metabolic intermediate biosynthesis; (R)-mevalonate biosynthesis; (R)-mevalonate from acetyl-CoA: step 3/3. Its function is as follows. Converts HMG-CoA to mevalonate. The chain is 3-hydroxy-3-methylglutaryl-coenzyme A reductase (hmgA) from Aeropyrum pernix (strain ATCC 700893 / DSM 11879 / JCM 9820 / NBRC 100138 / K1).